The primary structure comprises 76 residues: DNA-directed RNA polymerase subunit epsilon (76 aa).

Belongs to the RNA polymerase subunit epsilon family. In terms of assembly, RNAP is composed of a core of 2 alpha, a beta and a beta' subunit. The core is associated with a delta subunit, and at least one of epsilon or omega. When a sigma factor is associated with the core the holoenzyme is formed, which can initiate transcription.

The enzyme catalyses RNA(n) + a ribonucleoside 5'-triphosphate = RNA(n+1) + diphosphate. In terms of biological role, a non-essential component of RNA polymerase (RNAP). In Streptococcus equi subsp. zooepidemicus (strain H70), this protein is DNA-directed RNA polymerase subunit epsilon.